The primary structure comprises 129 residues: Large ribosomal subunit protein uL22 (129 aa).

The protein belongs to the universal ribosomal protein uL22 family. As to quaternary structure, part of the 50S ribosomal subunit.

This protein binds specifically to 23S rRNA; its binding is stimulated by other ribosomal proteins, e.g. L4, L17, and L20. It is important during the early stages of 50S assembly. It makes multiple contacts with different domains of the 23S rRNA in the assembled 50S subunit and ribosome. Functionally, the globular domain of the protein is located near the polypeptide exit tunnel on the outside of the subunit, while an extended beta-hairpin is found that lines the wall of the exit tunnel in the center of the 70S ribosome. This is Large ribosomal subunit protein uL22 from Rhizobium meliloti (strain 1021) (Ensifer meliloti).